A 678-amino-acid polypeptide reads, in one-letter code: Amino-acid acetyltransferase, mitochondrial (678 aa).

The interval 86–111 is disordered; that stretch reads LKAQHPPKAQTEPTTGHSKGTVTQSL. Polar residues predominate over residues 96–111; sequence TEPTTGHSKGTVTQSL. Positions 499-668 constitute an N-acetyltransferase domain; the sequence is NRPRLSLDDP…YEQVCRSIQP (170 aa).

The protein belongs to the acetyltransferase family.

The protein resides in the mitochondrion. The enzyme catalyses L-glutamate + acetyl-CoA = N-acetyl-L-glutamate + CoA + H(+). Its pathway is amino-acid biosynthesis; L-arginine biosynthesis; N(2)-acetyl-L-ornithine from L-glutamate: step 1/4. Its function is as follows. N-acetylglutamate synthase involved in arginine biosynthesis. The chain is Amino-acid acetyltransferase, mitochondrial (arg2) from Aspergillus oryzae (strain ATCC 42149 / RIB 40) (Yellow koji mold).